A 282-amino-acid chain; its full sequence is Large ribosomal subunit protein uL2 (282 aa).

Residues 215–282 form a disordered region; that stretch reads RHKGIRPTVR…IIRSRKETKK (68 aa). Residues 263 to 282 are compositionally biased toward basic residues; the sequence is RNPKKPSTKLIIRSRKETKK.

Belongs to the universal ribosomal protein uL2 family. As to quaternary structure, part of the 50S ribosomal subunit. Forms a bridge to the 30S subunit in the 70S ribosome.

Its function is as follows. One of the primary rRNA binding proteins. Required for association of the 30S and 50S subunits to form the 70S ribosome, for tRNA binding and peptide bond formation. It has been suggested to have peptidyltransferase activity; this is somewhat controversial. Makes several contacts with the 16S rRNA in the 70S ribosome. This is Large ribosomal subunit protein uL2 from Mesomycoplasma hyopneumoniae (strain J / ATCC 25934 / NCTC 10110) (Mycoplasma hyopneumoniae).